Reading from the N-terminus, the 648-residue chain is PAN2-PAN3 deadenylation complex subunit PAN3 (648 aa).

A disordered region spans residues 1 to 24 (MAATRYPPNDLRRQVGSPRSKGRE). The C3H1-type zinc-finger motif lies at 24-53 (ENKDTLCRNILIYGNCRYEDQGCTFNHDQN). Residues 244–506 (QVMPNSGLPQ…SIENFISGIA (263 aa)) are pseudokinase domain. ATP is bound by residues arginine 295, 345-352 (DYHPLSKT), and 404-405 (SK). Residues 507–545 (THMTAFFDLALQDGDEKQFHLARELENGRIARSMMKLMT) are a coiled coil. Positions 546–648 (IIERAEPGGA…SKTGAPGANN (103 aa)) are knob domain.

It belongs to the protein kinase superfamily. PAN3 family. Homodimer. Forms a heterotrimer with a catalytic subunit PAN2 to form the poly(A)-nuclease (PAN) deadenylation complex. Interacts (via PAM-2 motif) with poly(A)-binding protein PAB1 (via PABC domain), conferring substrate specificity of the enzyme complex.

Its subcellular location is the cytoplasm. In terms of biological role, regulatory subunit of the poly(A)-nuclease (PAN) deadenylation complex, one of two cytoplasmic mRNA deadenylases involved in mRNA turnover. PAN specifically shortens poly(A) tails of RNA and the activity is stimulated by poly(A)-binding protein PAB1. PAN deadenylation is followed by rapid degradation of the shortened mRNA tails by the CCR4-NOT complex. Deadenylated mRNAs are then degraded by two alternative mechanisms, namely exosome-mediated 3'-5' exonucleolytic degradation, or deadenylation-dependent mRNA decaping and subsequent 5'-3' exonucleolytic degradation by XRN1. May also be involved in post-transcriptional maturation of mRNA poly(A) tails. PAN3 acts as a positive regulator for PAN activity, recruiting the catalytic subunit PAN2 to mRNA via its interaction with RNA and with PAB1. In Chaetomium globosum (strain ATCC 6205 / CBS 148.51 / DSM 1962 / NBRC 6347 / NRRL 1970) (Soil fungus), this protein is PAN2-PAN3 deadenylation complex subunit PAN3.